The sequence spans 188 residues: ATP synthase subunit b (188 aa).

The chain crosses the membrane as a helical span at residues V19 to F39.

Belongs to the ATPase B chain family. In terms of assembly, F-type ATPases have 2 components, F(1) - the catalytic core - and F(0) - the membrane proton channel. F(1) has five subunits: alpha(3), beta(3), gamma(1), delta(1), epsilon(1). F(0) has three main subunits: a(1), b(2) and c(10-14). The alpha and beta chains form an alternating ring which encloses part of the gamma chain. F(1) is attached to F(0) by a central stalk formed by the gamma and epsilon chains, while a peripheral stalk is formed by the delta and b chains.

It is found in the cell membrane. F(1)F(0) ATP synthase produces ATP from ADP in the presence of a proton or sodium gradient. F-type ATPases consist of two structural domains, F(1) containing the extramembraneous catalytic core and F(0) containing the membrane proton channel, linked together by a central stalk and a peripheral stalk. During catalysis, ATP synthesis in the catalytic domain of F(1) is coupled via a rotary mechanism of the central stalk subunits to proton translocation. Its function is as follows. Component of the F(0) channel, it forms part of the peripheral stalk, linking F(1) to F(0). The chain is ATP synthase subunit b from Mesomycoplasma hyopneumoniae (strain 7448) (Mycoplasma hyopneumoniae).